Consider the following 201-residue polypeptide: LexA repressor (201 aa).

Residues 29-49 constitute a DNA-binding region (H-T-H motif); the sequence is VREICKAVGLSSTSSVHFHLK. Catalysis depends on for autocatalytic cleavage activity residues Ser-125 and Lys-162.

It belongs to the peptidase S24 family. In terms of assembly, homodimer.

The enzyme catalyses Hydrolysis of Ala-|-Gly bond in repressor LexA.. Functionally, represses a number of genes involved in the response to DNA damage (SOS response), including recA and lexA. In the presence of single-stranded DNA, RecA interacts with LexA causing an autocatalytic cleavage which disrupts the DNA-binding part of LexA, leading to derepression of the SOS regulon and eventually DNA repair. This is LexA repressor from Clostridium botulinum (strain 657 / Type Ba4).